Reading from the N-terminus, the 98-residue chain is MTKADFISLVAQTAGLTKKDATTATDAVISTITDVLAKGDSISFIGFGTFSTQERAAREARVPSTGKTIKVPATRVAKFKVGKNLKEAVAKASGKKKK.

Belongs to the bacterial histone-like protein family. Homodimer.

Histone-like DNA-binding protein which is capable of wrapping DNA to stabilize it, and thus to prevent its denaturation under extreme environmental conditions. The chain is DNA-binding protein HU (hup) from Campylobacter jejuni subsp. jejuni serotype O:2 (strain ATCC 700819 / NCTC 11168).